The chain runs to 101 residues: MRVKKGDTVVVIAGKDKGKKGSVLKVYPKTSKVLVEGVNVITKHQKPSAMNQQGGIINKEAPIHISNVMPFDPETGKGVRVRYEVKDGNKVRVSAKSGKEL.

The protein belongs to the universal ribosomal protein uL24 family. In terms of assembly, part of the 50S ribosomal subunit.

One of two assembly initiator proteins, it binds directly to the 5'-end of the 23S rRNA, where it nucleates assembly of the 50S subunit. Its function is as follows. One of the proteins that surrounds the polypeptide exit tunnel on the outside of the subunit. In Clostridioides difficile (strain 630) (Peptoclostridium difficile), this protein is Large ribosomal subunit protein uL24.